We begin with the raw amino-acid sequence, 160 residues long: Major strawberry allergen Fra a 1-A (160 aa).

The protein belongs to the BetVI family. As to quaternary structure, monomer.

In terms of biological role, may be involved in ripening of fruits. The polypeptide is Major strawberry allergen Fra a 1-A (Fragaria ananassa (Strawberry)).